We begin with the raw amino-acid sequence, 639 residues long: Threonine--tRNA ligase (639 aa).

The region spanning 1-61 is the TGS domain; it reads MINITLKDGK…KEDSELEILT (61 aa). The tract at residues 242 to 532 is catalytic; sequence DHRKLGKELD…LIEHFAGAFP (291 aa). Positions 333, 384, and 509 each coordinate Zn(2+).

Belongs to the class-II aminoacyl-tRNA synthetase family. Homodimer. It depends on Zn(2+) as a cofactor.

The protein resides in the cytoplasm. The catalysed reaction is tRNA(Thr) + L-threonine + ATP = L-threonyl-tRNA(Thr) + AMP + diphosphate + H(+). Functionally, catalyzes the attachment of threonine to tRNA(Thr) in a two-step reaction: L-threonine is first activated by ATP to form Thr-AMP and then transferred to the acceptor end of tRNA(Thr). Also edits incorrectly charged L-seryl-tRNA(Thr). The chain is Threonine--tRNA ligase from Clostridium tetani (strain Massachusetts / E88).